Here is a 455-residue protein sequence, read N- to C-terminus: L-serine dehydratase (455 aa).

This sequence belongs to the iron-sulfur dependent L-serine dehydratase family. [4Fe-4S] cluster is required as a cofactor.

It carries out the reaction L-serine = pyruvate + NH4(+). It participates in carbohydrate biosynthesis; gluconeogenesis. This chain is L-serine dehydratase (sdaA), found in Streptomyces coelicolor (strain ATCC BAA-471 / A3(2) / M145).